A 555-amino-acid chain; its full sequence is Formate--tetrahydrofolate ligase (555 aa).

Residue 65–72 coordinates ATP; the sequence is TPAGEGKS.

The protein belongs to the formate--tetrahydrofolate ligase family.

It catalyses the reaction (6S)-5,6,7,8-tetrahydrofolate + formate + ATP = (6R)-10-formyltetrahydrofolate + ADP + phosphate. It functions in the pathway one-carbon metabolism; tetrahydrofolate interconversion. The sequence is that of Formate--tetrahydrofolate ligase from Staphylococcus aureus (strain MRSA252).